The sequence spans 526 residues: Cell adhesion molecule CEACAM1 (526 aa).

The signal sequence occupies residues 1–34; it reads MGHLSAPLHRVRVPWQGLLLTASLLTFWNPPTTA. A Pyrrolidone carboxylic acid modification is found at glutamine 35. In terms of domain architecture, Ig-like V-type spans 35–142; it reads QLTTESMPFN…EATGQFHVYP (108 aa). The Extracellular portion of the chain corresponds to 35–428; that stretch reads QLTTESMPFN…LPQENGLSPG (394 aa). The interval 39-142 is required for homophilic binding; it reads ESMPFNVAEG…EATGQFHVYP (104 aa). N-linked (GlcNAc...) asparagine glycans are attached at residues asparagine 104, asparagine 111, asparagine 115, asparagine 152, asparagine 182, asparagine 197, asparagine 208, asparagine 224, asparagine 232, asparagine 254, asparagine 274, asparagine 288, asparagine 292, asparagine 302, asparagine 309, asparagine 345, asparagine 351, asparagine 363, asparagine 378, and asparagine 405. Ig-like C2-type domains are found at residues 145-232, 237-317, and 323-413; these read PKPS…VTLN, PDTP…KTII, and PVVA…IMLN. Cysteine 167 and cysteine 215 are joined by a disulfide. Cysteine 259 and cysteine 299 are disulfide-bonded. Cysteine 348 and cysteine 396 form a disulfide bridge. A helical transmembrane segment spans residues 429 to 452; sequence AIAGIVIGVVALVALIAVALACFL. The interaction with calmodulin stretch occupies residues 450 to 462; the sequence is CFLHFGKTGRASD. The segment at 452–526 is interaction with FLNA; the sequence is LHFGKTGRAS…EIIYSEVKKQ (75 aa). Topologically, residues 453 to 526 are cytoplasmic; it reads HFGKTGRASD…EIIYSEVKKQ (74 aa). The segment covering 461 to 482 has biased composition (basic and acidic residues); the sequence is SDQRDLTEHKPSVSNHTQDHSN. The interval 461 to 513 is disordered; sequence SDQRDLTEHKPSVSNHTQDHSNDPPNKMNEVTYSTLNFEAQQPTQPTSASPSL. The span at 489-513 shows a compositional bias: polar residues; that stretch reads NEVTYSTLNFEAQQPTQPTSASPSL. The required for interaction with PTPN11 and PTPN6 and for control of phosphorylation level stretch occupies residues 489–526; sequence NEVTYSTLNFEAQQPTQPTSASPSLTATEIIYSEVKKQ. Tyrosine 493 is modified (phosphotyrosine; by SRC, LCK, INSR and EGFR). Serine 508 is modified (phosphoserine). At tyrosine 520 the chain carries Phosphotyrosine; by INSR, SRC and LCK. The essential for interaction with PTPN11 and PTPN6 stretch occupies residues 520-523; that stretch reads YSEV.

Belongs to the immunoglobulin superfamily. CEA family. As to quaternary structure, monomer. Oligomer. Heterodimer. Homodimer. Cis-dimer/oligomer (via Ig-like C2-type and/or via cytoplasmic domains); induced by trans-homophilic cell adhesion through an allosteric mechanism transmitted by the Ig-like V-type domain, and is regulated by intracellular calcium and calmodulin. Interacts (via cytoplasmic domain) with calmodulin in a calcium dependent manner; reduces homophilic cell adhesion through dissociation of dimer. Isoform 1 interacts (via cytoplasmic domain) with PTPN11 (preferentially) and PTPN6; cis-homodimer form is preferred; this interaction is decreased by formation of Isoform 1 /Isoform 8 cis-heterodimers and is dependent on the monomer/dimer equilibrium; this interaction is phosphorylation-dependent. Isoform 1 interacts with LYN. Isoform 1 interacts (via cytoplasmic domain) with SRC (via SH2 domain); this interaction is regulated by trans-homophilic cell adhesion. Isoform 1 interacts (via cytoplasmic domain) with LCK; mediates phosphorylation at Tyr-493 and Tyr-520 resulting in PTPN6 association. Isoform 1 interacts with PTPN6; this interaction is phosphorylation-dependent and causes a profound decrease in TCR stimulation-induced CD247 and ZAP70 phosphorylation. Isoform 1 interacts with TCR/CD3 complex through TCR beta chain and CD3E; colocalizes at the cell surface and upon stimulation of the TCR/CD3 complex recruits PTPN6 in the TCR/CD3 complex, resulting in dephosphorylation of CD247 and ZAP70. Isoform 1 interacts (via cytoplasmic domain) with SHC1 (via SH2 domain); SHC1 mediates interaction with INSR or EGFR in a Ser-508 phosphorylation-dependent manner. Isoform 1 interacts with EGFR; the interaction is indirect. Isoform 1 interacts with CSF3R; down-regulates the CSF3R-STAT3 pathway through recruitment of PTPN6 that dephosphorylates CSF3R. Isoform 1 (phosphorylated form) interacts with TLR4 and SYK; recruits PTPN6 that dephosphorylates SYK, reducing the production of reactive oxygen species (ROS) and lysosome disruption, leading to a reduction of the inflammasome activity. Isoform 1 interacts with FLNA; inhibits cell migration and cell scattering by interfering with the interaction of FLNA with RALA. Isoform 1 interacts (via cytoplasmic domain) with PXN; the interaction is phosphotyrosyl-dependent. Isoform 1 interacts with KLRK1; recruits PTPN6 that dephosphorylates VAV1. Isoform 1 interacts with CEACAM8. Isoform 1 interacts with FASN; this interaction is insulin and phosphorylation-dependent; reduces fatty-acid synthase activity. Interacts (via Ig-like V-type) with HAVCR2 (via Ig-like V-type); facilitates the maturation and cell surface expression of HAVCR2 thereby regulating T cell tolerance induction. Isoform 8 interacts (via the cytoplasmic domain) with ANXA2; this interaction is regulated by phosphorylation and appears in the AIIt complex. Interacts (via Lewis X moieties) with CD209 (via C-type lectin domain); this interaction is regulated by the glycosylation pattern of CEACAM1 on cell types and regulates contact between dendritic cells and neutrophils. Phosphorylated on serine and tyrosine. Isoform 1 is phosphorylated on tyrosine by Src family kinases like SRC and LCK and by receptor like CSF3R, EGFR and INSR upon stimulation. Phosphorylated at Ser-508; mediates activity. Phosphorylated at Tyr-493; regulates activity. Phosphorylated at Tyr-493 by EGFR and INSR upon stimulation; this phosphorylation is Ser-508-phosphorylation-dependent; mediates cellular internalization; increases interaction with downstream proteins like SHC1 and FASN. Phosphorylated at Tyr-493 and Tyr-520 by LCK; mediates PTPN6 association and is regulated by homophilic ligation of CEACAM1 in the absence of T cell activation. Phosphorylated at Tyr-520; mediates interaction with PTPN11. In terms of processing, phosphorylated on serine and threonine. As to expression, expressed in columnar epithelial cells of the colon (at protein level). The predominant forms expressed by T cells are those containing a long cytoplasmic domain. Expressed in granulocytes and lymphocytes. Leukocytes only express isoforms 6 and isoform 1.

It localises to the cell membrane. Its subcellular location is the lateral cell membrane. The protein localises to the apical cell membrane. It is found in the basal cell membrane. The protein resides in the cell junction. It localises to the adherens junction. Its subcellular location is the secreted. The protein localises to the cytoplasmic vesicle. It is found in the secretory vesicle membrane. The protein resides in the cell projection. It localises to the microvillus membrane. In terms of biological role, cell adhesion protein that mediates homophilic cell adhesion in a calcium-independent manner. Plays a role as coinhibitory receptor in immune response, insulin action and also functions as an activator during angiogenesis. Its coinhibitory receptor function is phosphorylation- and PTPN6 -dependent, which in turn, suppress signal transduction of associated receptors by dephosphorylation of their downstream effectors. Plays a role in immune response, of T cells, natural killer (NK) and neutrophils. Upon TCR/CD3 complex stimulation, inhibits TCR-mediated cytotoxicity by blocking granule exocytosis by mediating homophilic binding to adjacent cells, allowing interaction with and phosphorylation by LCK and interaction with the TCR/CD3 complex which recruits PTPN6 resulting in dephosphorylation of CD247 and ZAP70. Also inhibits T cell proliferation and cytokine production through inhibition of JNK cascade and plays a crucial role in regulating autoimmunity and anti-tumor immunity by inhibiting T cell through its interaction with HAVCR2. Upon natural killer (NK) cells activation, inhibit KLRK1-mediated cytolysis of CEACAM1-bearing tumor cells by trans-homophilic interactions with CEACAM1 on the target cell and lead to cis-interaction between CEACAM1 and KLRK1, allowing PTPN6 recruitment and then VAV1 dephosphorylation. Upon neutrophils activation negatively regulates IL1B production by recruiting PTPN6 to a SYK-TLR4-CEACAM1 complex, that dephosphorylates SYK, reducing the production of reactive oxygen species (ROS) and lysosome disruption, which in turn, reduces the activity of the inflammasome. Down-regulates neutrophil production by acting as a coinhibitory receptor for CSF3R by down-regulating the CSF3R-STAT3 pathway through recruitment of PTPN6 that dephosphorylates CSF3R. Also regulates insulin action by promoting INS clearance and regulating lipogenesis in liver through regulating insulin signaling. Upon INS stimulation, undergoes phosphorylation by INSR leading to INS clearance by increasing receptor-mediated insulin endocytosis. This inernalization promotes interaction with FASN leading to receptor-mediated insulin degradation and to reduction of FASN activity leading to negative regulation of fatty acid synthesis. INSR-mediated phosphorylation also provokes a down-regulation of cell proliferation through SHC1 interaction resulting in decrease coupling of SHC1 to the MAPK3/ERK1-MAPK1/ERK2 and phosphatidylinositol 3-kinase pathways. Functions as activator in angiogenesis by promoting blood vessel remodeling through endothelial cell differentiation and migration and in arteriogenesis by increasing the number of collateral arteries and collateral vessel calibers after ischemia. Also regulates vascular permeability through the VEGFR2 signaling pathway resulting in control of nitric oxide production. Down-regulates cell growth in response to EGF through its interaction with SHC1 that mediates interaction with EGFR resulting in decrease coupling of SHC1 to the MAPK3/ERK1-MAPK1/ERK2 pathway. Negatively regulates platelet aggregation by decreasing platelet adhesion on type I collagen through the GPVI-FcRgamma complex. Inhibits cell migration and cell scattering through interaction with FLNA; interferes with the interaction of FLNA with RALA. Mediates bile acid transport activity in a phosphorylation dependent manner. Negatively regulates osteoclastogenesis. Cell adhesion protein that mediates homophilic cell adhesion in a calcium-independent manner. Promotes populations of T cells regulating IgA production and secretion associated with control of the commensal microbiota and resistance to enteropathogens. This chain is Cell adhesion molecule CEACAM1, found in Homo sapiens (Human).